Consider the following 218-residue polypeptide: Oxidative stress regulator AosR (218 aa).

Residues 5–9 (CGRRC) carry the CXXXC motif. Cysteine 5 and cysteine 9 are oxidised to a cystine.

Belongs to the AosR family. In terms of assembly, homodimer. Under oxidative stress, interacts with the extracytoplasmic-function (ECF) RNA polymerase sigma factor SigH.

With respect to regulation, activity is modulated by the formation of a disulfide bound within the N-terminal Cys-X-X-X-Cys (CXXXC) motif. This intramolecular disulfide bond is formed in response to oxidative stress, and results in oxidative stress-dependent interaction with the sigma factor SigH. Transcription factor crucial for intra-mycobacterial redox homeostasis and protection against host-derived oxidative and nitrosative radicals. In response to oxidative stress, interacts with the ECF sigma factor SigH and, in conjunction with SigH, binds to an auxiliary promoter upstream of mec-cysO-cysM, leading to the transcriptional activation of these genes encoding a non-canonical actinomycete-specific cysteine biosynthesis pathway. Increased transcription of mec-cysO-cysM results in enhanced production of L-cysteine and cysteine-derived antioxidant molecules. Increased production of cysteine protects mycobacteria cells from host phagocyte-derived oxidative and nitrosative stress, thus facilitating the mycobacterial growth in the host. The protein is Oxidative stress regulator AosR of Mycobacterium bovis (strain ATCC BAA-935 / AF2122/97).